Consider the following 273-residue polypeptide: Dermonecrotic toxin LapSicTox-alphaIB1c (273 aa).

Histidine 5 is a catalytic residue. Mg(2+) contacts are provided by glutamate 25 and aspartate 27. The active-site Nucleophile is the histidine 41. 2 disulfides stabilise this stretch: cysteine 45-cysteine 51 and cysteine 47-cysteine 190. Aspartate 85 provides a ligand contact to Mg(2+). Asparagine 250 is a glycosylation site (N-linked (GlcNAc...) asparagine).

It belongs to the arthropod phospholipase D family. Class II subfamily. The cofactor is Mg(2+). In terms of tissue distribution, expressed by the venom gland.

It is found in the secreted. It catalyses the reaction an N-(acyl)-sphingosylphosphocholine = an N-(acyl)-sphingosyl-1,3-cyclic phosphate + choline. The enzyme catalyses an N-(acyl)-sphingosylphosphoethanolamine = an N-(acyl)-sphingosyl-1,3-cyclic phosphate + ethanolamine. The catalysed reaction is a 1-acyl-sn-glycero-3-phosphocholine = a 1-acyl-sn-glycero-2,3-cyclic phosphate + choline. It carries out the reaction a 1-acyl-sn-glycero-3-phosphoethanolamine = a 1-acyl-sn-glycero-2,3-cyclic phosphate + ethanolamine. Dermonecrotic toxins cleave the phosphodiester linkage between the phosphate and headgroup of certain phospholipids (sphingolipid and lysolipid substrates), forming an alcohol (often choline) and a cyclic phosphate. This toxin acts on sphingomyelin (SM). It may also act on ceramide phosphoethanolamine (CPE), lysophosphatidylcholine (LPC) and lysophosphatidylethanolamine (LPE), but not on lysophosphatidylserine (LPS), and lysophosphatidylglycerol (LPG). It acts by transphosphatidylation, releasing exclusively cyclic phosphate products as second products. Induces dermonecrosis, hemolysis, increased vascular permeability, edema, inflammatory response, and platelet aggregation. This is Dermonecrotic toxin LapSicTox-alphaIB1c from Loxosceles apachea (Apache recluse spider).